Here is a 450-residue protein sequence, read N- to C-terminus: Serine--tRNA ligase, cytoplasmic (450 aa).

L-serine is bound at residue 238–240 (TSE). Residues 271 to 273 (RRE) and Val287 each bind ATP. Glu294 serves as a coordination point for L-serine. 358–361 (ELVS) is an ATP binding site. Thr396 is a binding site for L-serine.

This sequence belongs to the class-II aminoacyl-tRNA synthetase family. Type-1 seryl-tRNA synthetase subfamily. In terms of assembly, homodimer. The tRNA molecule binds across the dimer.

The protein resides in the cytoplasm. The protein localises to the cytosol. It catalyses the reaction tRNA(Ser) + L-serine + ATP = L-seryl-tRNA(Ser) + AMP + diphosphate + H(+). Its function is as follows. Catalyzes the attachment of serine to tRNA(Ser) in a two-step reaction: serine is first activated by ATP to form Ser-AMP and then transferred to the acceptor end of tRNA(Ser). The chain is Serine--tRNA ligase, cytoplasmic from Schizosaccharomyces pombe (strain 972 / ATCC 24843) (Fission yeast).